Consider the following 345-residue polypeptide: Dihydroorotase (345 aa).

Zn(2+) contacts are provided by His-13 and His-15. Substrate contacts are provided by residues 15–17 (HLR) and Asn-41. The Zn(2+) site is built by Lys-100, His-137, and His-175. N6-carboxylysine is present on Lys-100. Position 137 (His-137) interacts with substrate. Residue Leu-220 participates in substrate binding. Asp-248 contributes to the Zn(2+) binding site. Residue Asp-248 is part of the active site. Positions 252 and 264 each coordinate substrate.

It belongs to the metallo-dependent hydrolases superfamily. DHOase family. Class II DHOase subfamily. In terms of assembly, homodimer. The cofactor is Zn(2+).

The catalysed reaction is (S)-dihydroorotate + H2O = N-carbamoyl-L-aspartate + H(+). It functions in the pathway pyrimidine metabolism; UMP biosynthesis via de novo pathway; (S)-dihydroorotate from bicarbonate: step 3/3. Its function is as follows. Catalyzes the reversible cyclization of carbamoyl aspartate to dihydroorotate. This is Dihydroorotase from Laribacter hongkongensis (strain HLHK9).